The sequence spans 331 residues: Holliday junction branch migration complex subunit RuvB (331 aa).

A large ATPase domain (RuvB-L) region spans residues 1-182 (MSSDTLHKYE…FGIPLHLEFY (182 aa)). ATP-binding positions include L21, R22, G63, K66, T67, T68, 129–131 (EDY), R172, Y182, and R219. T67 contacts Mg(2+). Positions 183–254 (SVDELVLVIK…FANSALFRLG (72 aa)) are small ATPAse domain (RuvB-S). Residues 257–331 (GAGFDKMDLK…FEYLLSSKYI (75 aa)) are head domain (RuvB-H). Residues R310 and R315 each coordinate DNA.

This sequence belongs to the RuvB family. As to quaternary structure, homohexamer. Forms an RuvA(8)-RuvB(12)-Holliday junction (HJ) complex. HJ DNA is sandwiched between 2 RuvA tetramers; dsDNA enters through RuvA and exits via RuvB. An RuvB hexamer assembles on each DNA strand where it exits the tetramer. Each RuvB hexamer is contacted by two RuvA subunits (via domain III) on 2 adjacent RuvB subunits; this complex drives branch migration. In the full resolvosome a probable DNA-RuvA(4)-RuvB(12)-RuvC(2) complex forms which resolves the HJ.

It localises to the cytoplasm. The enzyme catalyses ATP + H2O = ADP + phosphate + H(+). Its function is as follows. The RuvA-RuvB-RuvC complex processes Holliday junction (HJ) DNA during genetic recombination and DNA repair, while the RuvA-RuvB complex plays an important role in the rescue of blocked DNA replication forks via replication fork reversal (RFR). RuvA specifically binds to HJ cruciform DNA, conferring on it an open structure. The RuvB hexamer acts as an ATP-dependent pump, pulling dsDNA into and through the RuvAB complex. RuvB forms 2 homohexamers on either side of HJ DNA bound by 1 or 2 RuvA tetramers; 4 subunits per hexamer contact DNA at a time. Coordinated motions by a converter formed by DNA-disengaged RuvB subunits stimulates ATP hydrolysis and nucleotide exchange. Immobilization of the converter enables RuvB to convert the ATP-contained energy into a lever motion, pulling 2 nucleotides of DNA out of the RuvA tetramer per ATP hydrolyzed, thus driving DNA branch migration. The RuvB motors rotate together with the DNA substrate, which together with the progressing nucleotide cycle form the mechanistic basis for DNA recombination by continuous HJ branch migration. Branch migration allows RuvC to scan DNA until it finds its consensus sequence, where it cleaves and resolves cruciform DNA. The polypeptide is Holliday junction branch migration complex subunit RuvB (Anaplasma marginale (strain St. Maries)).